The following is a 304-amino-acid chain: uncharacterized protein (304 aa).

72–79 (GPTGSGKT) lines the ATP pocket.

It belongs to the CbbQ/NirQ/NorQ/GpvN family.

This is an uncharacterized protein from Bacillus subtilis (strain 168).